A 683-amino-acid polypeptide reads, in one-letter code: Actin-binding LIM protein 3 (683 aa).

Residue M1 is modified to N-acetylmethionine. LIM zinc-binding domains lie at 21–80, 80–140, 149–208, and 208–268; these read IQCY…LYGT, TRCD…MASS, SHCA…QFGI, and IKCE…ARAE. S277, S280, S282, S286, S290, S337, S372, and S373 each carry phosphoserine. Residues 372-472 are disordered; the sequence is SSPGYIDSPT…EDISQTSKYS (101 aa). Residue Y376 is modified to Phosphotyrosine. S379 and S388 each carry phosphoserine. Polar residues-rich tracts occupy residues 380 to 393, 406 to 426, and 454 to 471; these read PTYS…TFSR, GRSS…TSYQ, and STAT…TSKY. A phosphoserine mark is found at S493, S503, and S504. T543 is modified (phosphothreonine). 3 positions are modified to phosphoserine: S567, S576, and S607. Residues 615–683 form the HP domain; the sequence is MREYKIYPYE…NELKKQARLF (69 aa). R631 carries the post-translational modification Omega-N-methylarginine.

Directly interacts with F-actin and ABRA. As to expression, expressed predominantly in heart and brain.

The protein localises to the cytoplasm. Functionally, may act as scaffold protein. May stimulate ABRA activity and ABRA-dependent SRF transcriptional activity. This is Actin-binding LIM protein 3 (ABLIM3) from Homo sapiens (Human).